We begin with the raw amino-acid sequence, 160 residues long: UPF0262 protein BCAN_A0255 (160 aa).

It belongs to the UPF0262 family.

The polypeptide is UPF0262 protein BCAN_A0255 (Brucella canis (strain ATCC 23365 / NCTC 10854 / RM-666)).